The primary structure comprises 407 residues: uncharacterized protein (407 aa).

Disordered stretches follow at residues 73-93 and 116-202; these read SPHS…VHGG and SGSI…IKPS. 5 consecutive repeat copies span residues 112–116, 117–121, 122–126, 127–131, and 132–136. Positions 112 to 136 are 5 X 5 AA tandem repeats of G-[S]-[IV]-R-[DNS]; that stretch reads GSIRSGSIRSGSIRNGSIRSGSVRD. A compositionally biased stretch (low complexity) spans 116-132; sequence SGSIRSGSIRNGSIRSG. A compositionally biased stretch (basic and acidic residues) spans 187-202; it reads NHYAESEYSEKSIKPS.

The protein belongs to the asfivirus B407L family.

This is an uncharacterized protein from Ornithodoros (relapsing fever ticks).